The following is a 343-amino-acid chain: tRNA N6-adenosine threonylcarbamoyltransferase (343 aa).

2 residues coordinate Fe cation: His-111 and His-115. Substrate is bound by residues 133–137, Asp-166, Gly-179, Asp-183, and Asn-273; that span reads AVSGG. Asp-301 contacts Fe cation.

The protein belongs to the KAE1 / TsaD family. Fe(2+) is required as a cofactor.

Its subcellular location is the cytoplasm. It catalyses the reaction L-threonylcarbamoyladenylate + adenosine(37) in tRNA = N(6)-L-threonylcarbamoyladenosine(37) in tRNA + AMP + H(+). Required for the formation of a threonylcarbamoyl group on adenosine at position 37 (t(6)A37) in tRNAs that read codons beginning with adenine. Is involved in the transfer of the threonylcarbamoyl moiety of threonylcarbamoyl-AMP (TC-AMP) to the N6 group of A37, together with TsaE and TsaB. TsaD likely plays a direct catalytic role in this reaction. The sequence is that of tRNA N6-adenosine threonylcarbamoyltransferase from Geotalea uraniireducens (strain Rf4) (Geobacter uraniireducens).